Consider the following 172-residue polypeptide: Ribosome maturation factor RimM (172 aa).

The 74-residue stretch at 95 to 168 folds into the PRC barrel domain; the sequence is QEGEFYYHQI…CVDVELMEGL (74 aa).

Belongs to the RimM family. Binds ribosomal protein uS19.

It localises to the cytoplasm. In terms of biological role, an accessory protein needed during the final step in the assembly of 30S ribosomal subunit, possibly for assembly of the head region. Essential for efficient processing of 16S rRNA. May be needed both before and after RbfA during the maturation of 16S rRNA. It has affinity for free ribosomal 30S subunits but not for 70S ribosomes. In Streptococcus pyogenes serotype M49 (strain NZ131), this protein is Ribosome maturation factor RimM.